The chain runs to 283 residues: Dihydropteroate synthase (283 aa).

The 257-residue stretch at 18 to 274 (PKIMGIVNLT…DVKATADALK (257 aa)) folds into the Pterin-binding domain. Asn25 lines the Mg(2+) pocket. Residues Thr66, Asp99, Asn119, Asp190, Lys227, and 262-264 (RVH) contribute to the (7,8-dihydropterin-6-yl)methyl diphosphate site.

Belongs to the DHPS family. As to quaternary structure, homodimer. The cofactor is Mg(2+).

It carries out the reaction (7,8-dihydropterin-6-yl)methyl diphosphate + 4-aminobenzoate = 7,8-dihydropteroate + diphosphate. Its pathway is cofactor biosynthesis; tetrahydrofolate biosynthesis; 7,8-dihydrofolate from 2-amino-4-hydroxy-6-hydroxymethyl-7,8-dihydropteridine diphosphate and 4-aminobenzoate: step 1/2. Catalyzes the condensation of para-aminobenzoate (pABA) with 6-hydroxymethyl-7,8-dihydropterin diphosphate (DHPt-PP) to form 7,8-dihydropteroate (H2Pte), the immediate precursor of folate derivatives. The chain is Dihydropteroate synthase (folP) from Neisseria meningitidis serogroup C.